Reading from the N-terminus, the 278-residue chain is Biotin synthase (278 aa).

In terms of domain architecture, Radical SAM core spans 1–227 (MQIMLCAISN…QSVVMVAGGR (227 aa)). 3 residues coordinate [4Fe-4S] cluster: Cys16, Cys20, and Cys23. [2Fe-2S] cluster is bound by residues Cys60, Asn96, and Cys154.

Belongs to the radical SAM superfamily. Biotin synthase family. As to quaternary structure, homodimer. The cofactor is [4Fe-4S] cluster. [2Fe-2S] cluster serves as cofactor.

The catalysed reaction is (4R,5S)-dethiobiotin + (sulfur carrier)-SH + 2 reduced [2Fe-2S]-[ferredoxin] + 2 S-adenosyl-L-methionine = (sulfur carrier)-H + biotin + 2 5'-deoxyadenosine + 2 L-methionine + 2 oxidized [2Fe-2S]-[ferredoxin]. Its pathway is cofactor biosynthesis; biotin biosynthesis; biotin from 7,8-diaminononanoate: step 2/2. Catalyzes the conversion of dethiobiotin (DTB) to biotin by the insertion of a sulfur atom into dethiobiotin via a radical-based mechanism. The polypeptide is Biotin synthase (Campylobacter jejuni subsp. jejuni serotype O:2 (strain ATCC 700819 / NCTC 11168)).